Consider the following 377-residue polypeptide: NADH dehydrogenase [ubiquinone] 1 alpha subcomplex subunit 9, mitochondrial (377 aa).

The transit peptide at 1 to 35 (MAAAAQSRVVRVLSMSRSAITAIATSVCHGPPCRQ) directs the protein to the mitochondrion. K175 bears the N6-succinyllysine mark. N6-acetyllysine occurs at positions 189 and 370.

Belongs to the complex I NDUFA9 subunit family. In terms of assembly, complex I is composed of 45 different subunits. This a component of the hydrophobic protein fraction. Interacts with BLOC1S1. Interacts with SLC2A4. Interacts with CLOCK. Interacts with RAB5IF. The cofactor is FAD. In terms of processing, acetylated on lysine residues. BLOC1S1 is required for acetylation. Acetylated by CLOCK in a circadian manner.

The protein localises to the mitochondrion matrix. Its function is as follows. Accessory subunit of the mitochondrial membrane respiratory chain NADH dehydrogenase (Complex I), that is believed not to be involved in catalysis. Required for proper complex I assembly. Complex I functions in the transfer of electrons from NADH to the respiratory chain. The immediate electron acceptor for the enzyme is believed to be ubiquinone. This is NADH dehydrogenase [ubiquinone] 1 alpha subcomplex subunit 9, mitochondrial (NDUFA9) from Homo sapiens (Human).